The chain runs to 227 residues: DNA repair protein RecO (227 aa).

This sequence belongs to the RecO family.

Involved in DNA repair and RecF pathway recombination. The sequence is that of DNA repair protein RecO from Pseudomonas putida (strain W619).